Reading from the N-terminus, the 125-residue chain is Type-4 ice-structuring protein (125 aa).

Positions 1-20 (MKYTLIAAIVVLALAQGTLA) are cleaved as a signal peptide.

It belongs to the apolipoprotein A1/A4/E family.

Its subcellular location is the secreted. Its function is as follows. Antifreeze proteins lower the blood freezing point. This Gadus morhua (Atlantic cod) protein is Type-4 ice-structuring protein.